The sequence spans 125 residues: Large-conductance mechanosensitive channel (125 aa).

2 helical membrane-spanning segments follow: residues 14–34 and 67–87; these read VIDL…VQSL and GSFL…FLIV.

This sequence belongs to the MscL family. In terms of assembly, homopentamer.

It localises to the cell membrane. Its function is as follows. Channel that opens in response to stretch forces in the membrane lipid bilayer. May participate in the regulation of osmotic pressure changes within the cell. The protein is Large-conductance mechanosensitive channel of Lactobacillus helveticus (strain DPC 4571).